Here is a 527-residue protein sequence, read N- to C-terminus: Zinc finger imprinted 2 (527 aa).

The span at 1-16 shows a compositional bias: acidic residues; that stretch reads MYQPEDDNNSDVTSDD. The disordered stretch occupies residues 1 to 104; it reads MYQPEDDNNS…SRSQDAESYQ (104 aa). 3 stretches are compositionally biased toward basic and acidic residues: residues 17 to 26, 35 to 56, and 80 to 99; these read DMTRNRRESS, SGDRDWDRRGRSRDMEPRDRWS, and FEMDREDDRDSRAYESRSQD. Positions 176 to 246 constitute a KRAB domain; that stretch reads VTFEDVLVDF…ETDSRHTVIC (71 aa). Residues 247-322 are disordered; that stretch reads QGESHDDPLE…GICTSPQSAS (76 aa). The span at 259–275 shows a compositional bias: polar residues; that stretch reads QGNQEKLLTPITMNDPK. Residues 297–307 are compositionally biased toward basic and acidic residues; sequence QSKDPLGKDPQ. 5 C2H2-type zinc fingers span residues 328-350, 356-378, 412-434, 466-488, and 494-516; these read NRCEFCKRTFSTQVALRRHERIH, YECKQCAEAFYLMPHLNRHQKTH, FECFQCGKAFLQNVHLLQHLKAH, CQCCDCGRVFSRNSYLIQHYRTH, and YQCQLCGKCFGRPSYLTQHYQLH.

It belongs to the krueppel C2H2-type zinc-finger protein family. Highest levels of expression in adult testis; modest levels in fetal kidney and brain.

Its subcellular location is the nucleus. May be involved in transcriptional regulation. The sequence is that of Zinc finger imprinted 2 (ZIM2) from Homo sapiens (Human).